The following is a 90-amino-acid chain: UPF0297 protein Swol_0469 (90 aa).

Belongs to the UPF0297 family.

The protein is UPF0297 protein Swol_0469 of Syntrophomonas wolfei subsp. wolfei (strain DSM 2245B / Goettingen).